Consider the following 327-residue polypeptide: o-succinylbenzoate synthase (327 aa).

Lys-110 acts as the Proton donor in catalysis. Residues Asp-138, Glu-165, and Asp-188 each contribute to the Mg(2+) site. Lys-212 acts as the Proton acceptor in catalysis.

The protein belongs to the mandelate racemase/muconate lactonizing enzyme family. MenC type 1 subfamily. A divalent metal cation is required as a cofactor.

The catalysed reaction is (1R,6R)-6-hydroxy-2-succinyl-cyclohexa-2,4-diene-1-carboxylate = 2-succinylbenzoate + H2O. Its pathway is quinol/quinone metabolism; 1,4-dihydroxy-2-naphthoate biosynthesis; 1,4-dihydroxy-2-naphthoate from chorismate: step 4/7. It functions in the pathway quinol/quinone metabolism; menaquinone biosynthesis. In terms of biological role, converts 2-succinyl-6-hydroxy-2,4-cyclohexadiene-1-carboxylate (SHCHC) to 2-succinylbenzoate (OSB). The chain is o-succinylbenzoate synthase from Mycobacterium marinum (strain ATCC BAA-535 / M).